Here is a 199-residue protein sequence, read N- to C-terminus: Proteasome subunit beta 2 (199 aa).

A propeptide spans 1-6 (removed in mature form; by autocatalysis); the sequence is MEKKTG. Thr-7 functions as the Nucleophile in the catalytic mechanism.

This sequence belongs to the peptidase T1B family. As to quaternary structure, the 20S proteasome core is composed of 14 alpha and 14 beta subunits that assemble into four stacked heptameric rings, resulting in a barrel-shaped structure. The two inner rings, each composed of seven catalytic beta subunits, are sandwiched by two outer rings, each composed of seven alpha subunits. The catalytic chamber with the active sites is on the inside of the barrel. Has a gated structure, the ends of the cylinder being occluded by the N-termini of the alpha-subunits. Is capped at one or both ends by the proteasome regulatory ATPase, PAN.

It localises to the cytoplasm. The catalysed reaction is Cleavage of peptide bonds with very broad specificity.. The formation of the proteasomal ATPase PAN-20S proteasome complex, via the docking of the C-termini of PAN into the intersubunit pockets in the alpha-rings, triggers opening of the gate for substrate entry. Interconversion between the open-gate and close-gate conformations leads to a dynamic regulation of the 20S proteasome proteolysis activity. Component of the proteasome core, a large protease complex with broad specificity involved in protein degradation. The sequence is that of Proteasome subunit beta 2 from Thermococcus kodakarensis (strain ATCC BAA-918 / JCM 12380 / KOD1) (Pyrococcus kodakaraensis (strain KOD1)).